Here is a 209-residue protein sequence, read N- to C-terminus: Urease accessory protein UreG (209 aa).

10-17 contributes to the GTP binding site; the sequence is GPVGSGKT.

This sequence belongs to the SIMIBI class G3E GTPase family. UreG subfamily. In terms of assembly, homodimer. UreD, UreF and UreG form a complex that acts as a GTP-hydrolysis-dependent molecular chaperone, activating the urease apoprotein by helping to assemble the nickel containing metallocenter of UreC. The UreE protein probably delivers the nickel.

It localises to the cytoplasm. Facilitates the functional incorporation of the urease nickel metallocenter. This process requires GTP hydrolysis, probably effectuated by UreG. The chain is Urease accessory protein UreG from Lysinibacillus sphaericus (strain C3-41).